A 458-amino-acid chain; its full sequence is Probable M18 family aminopeptidase 1 (458 aa).

His-95, His-170, and His-434 together coordinate Zn(2+).

The protein belongs to the peptidase M18 family. Requires Zn(2+) as cofactor.

The polypeptide is Probable M18 family aminopeptidase 1 (apeA) (Borreliella burgdorferi (strain ATCC 35210 / DSM 4680 / CIP 102532 / B31) (Borrelia burgdorferi)).